The chain runs to 329 residues: BTB/POZ domain-containing adapter for CUL3-mediated RhoA degradation protein 1 (329 aa).

Residues 1–22 are compositionally biased toward low complexity; that stretch reads MSAEASGPAAAAAPSLEAPKPS. The interval 1 to 31 is disordered; the sequence is MSAEASGPAAAAAPSLEAPKPSGLEPGPAAY. Residues 41 to 109 enclose the BTB domain; it reads KYVKLNVGGS…LRDGSVPLPE (69 aa). Positions 282-303 are disordered; that stretch reads ATGGAAGAGGAGRGEDEENREH.

This sequence belongs to the BACURD family. As to quaternary structure, homotetramer; forms a two-fold symmetric tetramer in solution. Interacts with CUL3; interaction is direct and forms a 5:5 heterodecamer. Component of the BCR(KCTD13) E3 ubiquitin ligase complex, at least composed of CUL3, KCTD13/BACURD1 and RBX1. Interacts with RHOA; with a preference for RhoA-GDP. Interacts with POLD2 and PCNA. Interacts with SPRTN. In terms of tissue distribution, expressed in a wide variety of tissues.

The protein resides in the nucleus. The protein operates within protein modification; protein ubiquitination. In terms of biological role, substrate-specific adapter of a BCR (BTB-CUL3-RBX1) E3 ubiquitin-protein ligase complex required for synaptic transmission. The BCR(KCTD13) E3 ubiquitin ligase complex mediates the ubiquitination of RHOA, leading to its degradation by the proteasome Degradation of RHOA regulates the actin cytoskeleton and promotes synaptic transmission. This Homo sapiens (Human) protein is BTB/POZ domain-containing adapter for CUL3-mediated RhoA degradation protein 1 (KCTD13).